The following is a 311-amino-acid chain: Catechol 1,2-dioxygenase 1 (311 aa).

4 residues coordinate Fe cation: Tyr164, Tyr200, His224, and His226.

The protein belongs to the intradiol ring-cleavage dioxygenase family. Homodimer. It depends on Fe(3+) as a cofactor.

It catalyses the reaction catechol + O2 = cis,cis-muconate + 2 H(+). It functions in the pathway aromatic compound metabolism; beta-ketoadipate pathway; 5-oxo-4,5-dihydro-2-furylacetate from catechol: step 1/3. Functionally, can cleave 4-methyl-, 4-chloro-, and 3-methoxycatechol at lower rates than catechol, but has no activity with 4-nitrocatechol or protocatechuic acid. This Acinetobacter lwoffii protein is Catechol 1,2-dioxygenase 1 (catA1).